Here is a 1157-residue protein sequence, read N- to C-terminus: ATP-dependent helicase/deoxyribonuclease subunit B (1157 aa).

One can recognise a UvrD-like helicase ATP-binding domain in the interval 1-277; the sequence is MTLQIIAGKA…KILLENKRAN (277 aa). 8–15 serves as a coordination point for ATP; that stretch reads GKAGTGKT. The 320-residue stretch at 271 to 590 folds into the UvrD-like helicase C-terminal domain; it reads LENKRANSDS…VLADMENAKL (320 aa). [4Fe-4S] cluster-binding residues include C794, C1115, C1118, and C1124.

The protein belongs to the helicase family. AddB/RexB type 1 subfamily. Heterodimer of AddA and AddB. The cofactor is Mg(2+). It depends on [4Fe-4S] cluster as a cofactor.

In terms of biological role, the heterodimer acts as both an ATP-dependent DNA helicase and an ATP-dependent, dual-direction single-stranded exonuclease. Recognizes the chi site generating a DNA molecule suitable for the initiation of homologous recombination. The AddB subunit has 5' -&gt; 3' nuclease activity but not helicase activity. The protein is ATP-dependent helicase/deoxyribonuclease subunit B of Listeria innocua serovar 6a (strain ATCC BAA-680 / CLIP 11262).